Here is a 281-residue protein sequence, read N- to C-terminus: Gas vesicle protein L1 (281 aa).

It belongs to the gas vesicle GvpF/GvpL family. In terms of assembly, may form oligomers. GvpF to GvpM interact with each other in vitro, and may form multi-subunit complex(es). Interacts with GvpC1, GvpN1 and GvpO1.

The protein resides in the gas vesicle. Its subcellular location is the cytoplasm. Functionally, proteins GvpF to GvpM might be involved in nucleating gas vesicle formation. A minor component of the gas vesicle. This the only minor gas vesicle protein that binds all the others (including GvpC1, GvpN1 and GvpO1, but not GvpA1), suggesting it might be able to assemble them. Gas vesicles are hollow, gas filled proteinaceous nanostructures found in several microbial planktonic microorganisms. They allow positioning of halobacteria at the optimal depth for growth in the poorly aerated, shallow brine pools of their habitat. Its function is as follows. Expression of a 9.5 kb p-vac DNA fragment containing 2 divergently transcribed regions (gvpD-gvpE-gvpF-gvpG-gvpH-gvpI-gvpJ-gvpK-gvpL-gvpM and gvpA-gvpC-gvpN-gvpO) allows H.volcanii to produce gas vesicles. A minimal gas vesicle can be made in H.volcanii by gvpA1-gvpO1 plus gvpF1-gvpG1-gvpJ1-gvpK1-gvpL1-gvpM1; lack of enough GvpJ1 prevents their formation. A similar region restores gas vesicle production in H.halobium without the p-vac locus, but it still has the c-vac locus. The sequence is that of Gas vesicle protein L1 (gvpL11) from Halobacterium salinarum (strain ATCC 700922 / JCM 11081 / NRC-1) (Halobacterium halobium).